Here is a 151-residue protein sequence, read N- to C-terminus: MEILGFTVMGGGGSPAWIEVPEKSKSAFWELKRRKVHRYVIFKIDDRREEIVVEKTGAPGESYDDFTASLPADDCRYAVYDLDFVSDDNCRKSKIFFISWSPSVSRIRAKTIYAVSRNQFRHELDGVHFEIQATDPDDMDLEVLRGRANRT.

Residues 15-149 enclose the ADF-H domain; sequence PAWIEVPEKS…DLEVLRGRAN (135 aa).

It belongs to the actin-binding proteins ADF family.

Its function is as follows. Actin-depolymerizing protein. Severs actin filaments (F-actin) and binds to actin monomers. This is Actin-depolymerizing factor 10 (ADF10) from Oryza sativa subsp. japonica (Rice).